Here is a 238-residue protein sequence, read N- to C-terminus: Transcription factor MYB27 (238 aa).

HTH myb-type domains follow at residues E6 to L58 and N59 to Q113. Residues E31–A38 carry the Nuclear localization signal motif. 2 DNA-binding regions (H-T-H motif) span residues W34–L58 and W86–Y109.

The protein localises to the nucleus. In Arabidopsis thaliana (Mouse-ear cress), this protein is Transcription factor MYB27.